We begin with the raw amino-acid sequence, 608 residues long: ATP-citrate synthase beta chain protein 1 (608 aa).

Residues I214–G234 and F265–A291 contribute to the ATP site. Residue E231 participates in Mg(2+) binding. The Tele-phosphohistidine intermediate role is filled by H273. A CoA-binding site is contributed by L292–S302.

It belongs to the succinate/malate CoA ligase alpha subunit family. Heterooctamer of 4 alpha and 4 beta chains.

Its subcellular location is the cytoplasm. The protein resides in the cytosol. It catalyses the reaction oxaloacetate + acetyl-CoA + ADP + phosphate = citrate + ATP + CoA. Its function is as follows. ATP citrate-lyase is the primary enzyme responsible for the synthesis of cytosolic acetyl-CoA, used for the elongation of fatty acids and biosynthesis of isoprenoids, flavonoids and malonated derivatives. May supply substrate to the cytosolic acetyl-CoA carboxylase, which generates the malonyl-CoA used for the synthesis of a multitude of compounds, including very long chain fatty acids and flavonoids. In contrast to all known animal ACL enzymes having a homomeric structure, plant ACLs are composed of alpha and beta chains. This chain is ATP-citrate synthase beta chain protein 1 (ACLB-1), found in Oryza sativa subsp. japonica (Rice).